Reading from the N-terminus, the 814-residue chain is MMILSIIATVVLLGALFYHRVSLFLSSLILLAWTAALGVAGLWSIWLLVPLAIILVPFNLTPMRKSMISAPVFRGFRKVMPPMSRTEKEAIDAGTTWWEGDLFQGKPDWKKLHNYPQPQLTAEEQAFLDGPVEEACRMANDFQITHELADLPPELWAYLKEHRFFAMIIKKEYGGLEFSAYVQSRVLQKLSGVSGILAITVGVPNSLGPGELLQHYGTEEQKNHYLPRLARGQEIPCFALTSPEAGSDAGAIPDTGVVCMGEWQGQQVLGMRLTWNKRYITLAPIATVLGLAFKLSDPDRLLGGEEELGITCALIPTSTPGVEIGRRHFPLNVPFQNGPTRGNDIFVPIDYIIGGPKMAGQGWRMLVECLSVGRGITLPSNSTGGVKSVALATGAYAHIRRQFKISIGKMEGIEEPLARIAGNAYVMDAAASLITYGIMLGEKPAVLSAIVKYHCTHRGQQSIIDAMDITGGKGIMLGESNFLARAYQGAPIAITVEGANILTRSMMIFGQGAIRCHPYVLEEMAAAQNNDVNAFDKLLFKHIGHVGSNTVRSFWLGLTRGLTSHTPTGDATKRYYQHLNRLSANLALLSDVSMAVLGGSLKRRERISTRLGDVLSQLYLASAVLKRYDDEGRHEADLPLVHWGVQDALYRAEQAMDDLLQNFPNRVVAGLLTAMIFPTGRHYLAPSDKLDHAVAKILQVPNATRSRIGRGQYLTPAEHNPVGLLEEALRDVIAADPIHQRICKELGKNLPFTRLDELARNALAKGLIDKDEAAILAKAEESRLRSINVDDFEPEALATKPVKLPEKVRKVEAA.

Residue glutamate 497 is the Proton acceptor of the active site.

It belongs to the acyl-CoA dehydrogenase family. It depends on FAD as a cofactor.

It carries out the reaction a medium-chain 2,3-saturated fatty acyl-CoA + oxidized [electron-transfer flavoprotein] + H(+) = a medium-chain (2E)-enoyl-CoA + reduced [electron-transfer flavoprotein]. The catalysed reaction is a long-chain 2,3-saturated fatty acyl-CoA + oxidized [electron-transfer flavoprotein] + H(+) = a long-chain (2E)-enoyl-CoA + reduced [electron-transfer flavoprotein]. The protein operates within lipid metabolism; fatty acid beta-oxidation. Its function is as follows. Catalyzes the dehydrogenation of acyl-coenzymes A (acyl-CoAs) to 2-enoyl-CoAs, the first step of the beta-oxidation cycle of fatty acid degradation. Is required for the utilization of medium- and long-chain fatty acids as sole carbon sources for growth. Is needed for bacterial survival during carbone-source starvation. This chain is Acyl-coenzyme A dehydrogenase (fadE), found in Salmonella typhi.